The chain runs to 254 residues: Adenosine 5'-phosphosulfate reductase (254 aa).

Residues cysteine 140, cysteine 141, cysteine 223, and cysteine 226 each contribute to the [4Fe-4S] cluster site. Cysteine 249 functions as the Nucleophile; cysteine thiosulfonate intermediate in the catalytic mechanism.

This sequence belongs to the PAPS reductase family. CysH subfamily. It depends on [4Fe-4S] cluster as a cofactor.

The protein localises to the cytoplasm. It catalyses the reaction [thioredoxin]-disulfide + sulfite + AMP + 2 H(+) = adenosine 5'-phosphosulfate + [thioredoxin]-dithiol. Its pathway is sulfur metabolism; hydrogen sulfide biosynthesis; sulfite from sulfate. Catalyzes the formation of sulfite from adenosine 5'-phosphosulfate (APS) using thioredoxin as an electron donor. The polypeptide is Adenosine 5'-phosphosulfate reductase (Mycobacterium bovis (strain ATCC BAA-935 / AF2122/97)).